The chain runs to 422 residues: MGASGRWIKALVGFTKSDKSRSSKKDENVKVATKSRFGRKNSVDFDFEKFQDGFEDSNTRSMVDTGVSTSTSLQSYGGVAYDEQSRENRAATRIQTAYRGFLARRALRALKGLVRLQALVRGHAVRKQAAVTLRCMQALVRVQARVRARRVRLALELESETSQQTLQQQLADEARVREIEEGWCDSIGSVEQIQAKLLKRQEAAAKRERAMAYALTHQWQAGTRLLSAHSGFQPDKNNWGWNWLERWMAVRPWENRFLDSNLRDDAKLGENGMEQSENVPKTQIKSVSKMPNTSNLVSGVSSQMTGPCQSDGDSSSPGISSSIPVVSKAKSKPAKDDLAVEVNSRPGAGPRSHSNPKERSREPNRSSKERLSLPNSGKSLGSQSTKANRAGKLTPASQKVVEEKSAQNQRRRNSDPIKQRLA.

Residues 23–30 (SKKDENVK) carry the Nuclear localization signal motif. IQ domains lie at 87 to 115 (ENRAATRIQTAYRGFLARRALRALKGLVR), 116 to 138 (LQALVRGHAVRKQAAVTLRCMQA), and 139 to 164 (LVRVQARVRARRVRLALELESETSQQ). The interval 137-151 (QALVRVQARVRARRV) is calmodulin-binding. Positions 269 to 422 (GENGMEQSEN…NSDPIKQRLA (154 aa)) are disordered. The span at 273 to 308 (MEQSENVPKTQIKSVSKMPNTSNLVSGVSSQMTGPC) shows a compositional bias: polar residues. Low complexity predominate over residues 310–327 (SDGDSSSPGISSSIPVVS). Basic and acidic residues predominate over residues 355-371 (NPKERSREPNRSSKERL). Positions 373–387 (LPNSGKSLGSQSTKA) are enriched in polar residues. Residues 412–422 (RNSDPIKQRLA) show a composition bias toward basic and acidic residues.

The protein belongs to the IQD family. As to quaternary structure, binds to multiple calmodulin (CaM) in the presence of Ca(2+) and CaM-like proteins. As to expression, expressed mostly in vegetative tissues including older parts of the root, cotyledons, leaves and shoot apical meristems (SAM). Present at low levels in pollen, siliques and seeds.

It localises to the nucleus. The protein localises to the cytoplasm. Its subcellular location is the cytoskeleton. The protein resides in the spindle. It is found in the phragmoplast. Its function is as follows. May be involved in cooperative interactions with calmodulins or calmodulin-like proteins. Recruits calmodulin (CaM) calcium sensor proteins to cortical microtubule arrays, thus being a potential scaffold in cellular signaling and trafficking. Binds to microtubules (MTs) and promotes MT assembly and dynamics to modulate pavement cell (PC) morphogenesis via cellulose deposition-dependent anisotropic cell expansion triggered by cellulose synthase complexes (CSCs). May associate with nucleic acids and regulate gene expression at the transcriptional or post-transcriptional level. In Arabidopsis thaliana (Mouse-ear cress), this protein is Protein IQ-DOMAIN 5.